Consider the following 377-residue polypeptide: uncharacterized protein (377 aa).

A run of 4 helical transmembrane segments spans residues 26-46, 67-87, 108-128, and 135-155; these read TFQNYLLILSMIVSIAVVVAI, TVGSILATISALLVSISWVII, FLTFVVISFTTVFLFILISLT, and IDYGIIYYVIMLNFLMYALYI.

Its subcellular location is the cell membrane. This is an uncharacterized protein from Methanocaldococcus jannaschii (strain ATCC 43067 / DSM 2661 / JAL-1 / JCM 10045 / NBRC 100440) (Methanococcus jannaschii).